A 297-amino-acid chain; its full sequence is Protoheme IX farnesyltransferase 1 (297 aa).

The next 9 membrane-spanning stretches (helical) occupy residues 23 to 43 (VVVL…RAGV), 45 to 65 (WSVL…AAVV), 93 to 113 (LPAL…LLVF), 117 to 137 (LTAW…TGFL), 145 to 165 (IVIG…AVSG), 171 to 191 (PLLL…ALAI), 216 to 236 (LHIL…YAIH), 241 to 261 (LYLV…WVLY), and 277 to 297 (IGYL…LLNL).

It belongs to the UbiA prenyltransferase family. Protoheme IX farnesyltransferase subfamily.

It is found in the cell inner membrane. The catalysed reaction is heme b + (2E,6E)-farnesyl diphosphate + H2O = Fe(II)-heme o + diphosphate. It functions in the pathway porphyrin-containing compound metabolism; heme O biosynthesis; heme O from protoheme: step 1/1. In terms of biological role, converts heme B (protoheme IX) to heme O by substitution of the vinyl group on carbon 2 of heme B porphyrin ring with a hydroxyethyl farnesyl side group. The sequence is that of Protoheme IX farnesyltransferase 1 from Pseudomonas putida (strain ATCC 47054 / DSM 6125 / CFBP 8728 / NCIMB 11950 / KT2440).